Reading from the N-terminus, the 258-residue chain is Snake venom serine protease 1 (258 aa).

Positions 1–18 (MVLIRVLANLLILQLSYA) are cleaved as a signal peptide. Residues 19–24 (QKSSEL) constitute a propeptide that is removed on maturation. Positions 25–249 (VVGGDECNIN…YNDWIKSIIA (225 aa)) constitute a Peptidase S1 domain. 6 cysteine pairs are disulfide-bonded: Cys-31/Cys-163, Cys-50/Cys-66, Cys-98/Cys-256, Cys-142/Cys-210, Cys-174/Cys-189, and Cys-200/Cys-225. A glycan (N-linked (GlcNAc...) asparagine) is linked at Asn-44. Active-site charge relay system residues include His-65 and Asp-110. Ser-204 (charge relay system) is an active-site residue.

This sequence belongs to the peptidase S1 family. Snake venom subfamily. In terms of assembly, monomer. In terms of tissue distribution, expressed by the venom gland.

The protein localises to the secreted. Its function is as follows. Snake venom serine protease that may act in the hemostasis system of the prey. The chain is Snake venom serine protease 1 (TLG1) from Craspedocephalus gramineus (Bamboo pit viper).